The following is a 624-amino-acid chain: Dihydroxy-acid dehydratase (624 aa).

Asp-81 serves as a coordination point for Mg(2+). Position 122 (Cys-122) interacts with [2Fe-2S] cluster. Mg(2+) is bound by residues Asp-123 and Lys-124. Lys-124 is subject to N6-carboxylysine. Residue Cys-195 coordinates [2Fe-2S] cluster. Glu-499 lines the Mg(2+) pocket. Ser-525 serves as the catalytic Proton acceptor.

This sequence belongs to the IlvD/Edd family. In terms of assembly, homodimer. Requires [2Fe-2S] cluster as cofactor. It depends on Mg(2+) as a cofactor.

The enzyme catalyses (2R)-2,3-dihydroxy-3-methylbutanoate = 3-methyl-2-oxobutanoate + H2O. The catalysed reaction is (2R,3R)-2,3-dihydroxy-3-methylpentanoate = (S)-3-methyl-2-oxopentanoate + H2O. It participates in amino-acid biosynthesis; L-isoleucine biosynthesis; L-isoleucine from 2-oxobutanoate: step 3/4. Its pathway is amino-acid biosynthesis; L-valine biosynthesis; L-valine from pyruvate: step 3/4. Its function is as follows. Functions in the biosynthesis of branched-chain amino acids. Catalyzes the dehydration of (2R,3R)-2,3-dihydroxy-3-methylpentanoate (2,3-dihydroxy-3-methylvalerate) into 2-oxo-3-methylpentanoate (2-oxo-3-methylvalerate) and of (2R)-2,3-dihydroxy-3-methylbutanoate (2,3-dihydroxyisovalerate) into 2-oxo-3-methylbutanoate (2-oxoisovalerate), the penultimate precursor to L-isoleucine and L-valine, respectively. The sequence is that of Dihydroxy-acid dehydratase from Shewanella baltica (strain OS185).